Consider the following 141-residue polypeptide: UPF0310 protein Mflv_0785 (141 aa).

Belongs to the UPF0310 family.

The sequence is that of UPF0310 protein Mflv_0785 from Mycolicibacterium gilvum (strain PYR-GCK) (Mycobacterium gilvum (strain PYR-GCK)).